The primary structure comprises 408 residues: Serine-rich antigen (408 aa).

Tandem repeats lie at residues 209–214 (SVAQSE) and 230–235 (SVAQSE). Positions 209-235 (SVAQSEEHGSDSMSQSYNTCGSVAQSE) are 2 X 6 AA repeats of S-V-A-Q-S-E.

The protein belongs to the mycobacterial PPE family.

The protein is Serine-rich antigen (sra) of Mycobacterium leprae (strain TN).